Consider the following 345-residue polypeptide: uncharacterized protein (345 aa).

This is an uncharacterized protein from Acidianus filamentous virus 2 (isolate Italy/Pozzuoli) (AFV-2).